Here is a 496-residue protein sequence, read N- to C-terminus: Probable fatty acyl-CoA reductase 5 (496 aa).

Belongs to the fatty acyl-CoA reductase family. In terms of tissue distribution, expressed in the endodermal cell layer surrounding the central vasculature in roots. Expressed in floral organs of very young unopened buds and receptacle of siliques.

The catalysed reaction is a long-chain fatty acyl-CoA + 2 NADPH + 2 H(+) = a long-chain primary fatty alcohol + 2 NADP(+) + CoA. Functionally, catalyzes the reduction of fatty acyl-CoA to fatty alcohols. Catalyzes specifically the formation of C18:0 fatty alcohol. Provides the fatty alcohols required for synthesis of suberin in roots, seed coat and wound-induced leaf tissue. Provides the fatty alcohols required for synthesis of alkyl hydroxycinnamates in root waxes. This Arabidopsis thaliana (Mouse-ear cress) protein is Probable fatty acyl-CoA reductase 5.